A 358-amino-acid polypeptide reads, in one-letter code: Protein ocs (358 aa).

This sequence belongs to the lysopine/nopaline/octopine/opine/vitopine dehydrogenases family. As to quaternary structure, monomer.

It catalyses the reaction D-octopine + NAD(+) + H2O = L-arginine + pyruvate + NADH + H(+). The catalysed reaction is D-lysopine + NADP(+) + H2O = L-lysine + pyruvate + NADPH + H(+). Reductive condensation of pyruvate and arginine, lysine, histidine, or octopine to form octopine, lysopine, histopine, or octopinic acid, respectively. NADPH is the preferred cofactor, but NADH can also be used. In Agrobacterium tumefaciens (strain Ach5), this protein is Protein ocs (ocs).